A 155-amino-acid chain; its full sequence is DNA gyrase inhibitor (155 aa).

It belongs to the DNA gyrase inhibitor family. As to quaternary structure, interacts with DNA gyrase.

The protein resides in the cytoplasm. Its function is as follows. Inhibits the supercoiling activity of DNA gyrase. Acts by inhibiting DNA gyrase at an early step, prior to (or at the step of) binding of DNA by the gyrase. It protects cells against toxins that target DNA gyrase, by inhibiting activity of these toxins and reducing the formation of lethal double-strand breaks in the cell. This chain is DNA gyrase inhibitor, found in Citrobacter koseri (strain ATCC BAA-895 / CDC 4225-83 / SGSC4696).